We begin with the raw amino-acid sequence, 259 residues long: Ribonuclease HII (259 aa).

The 189-residue stretch at 70-258 (TLIAGIDEVG…VKSLVLGKKE (189 aa)) folds into the RNase H type-2 domain. A divalent metal cation contacts are provided by Asp-76, Glu-77, and Asp-168.

The protein belongs to the RNase HII family. The cofactor is Mn(2+). Mg(2+) is required as a cofactor.

Its subcellular location is the cytoplasm. It carries out the reaction Endonucleolytic cleavage to 5'-phosphomonoester.. In terms of biological role, endonuclease that specifically degrades the RNA of RNA-DNA hybrids. The sequence is that of Ribonuclease HII from Streptococcus pneumoniae (strain P1031).